Consider the following 268-residue polypeptide: MDRYQATFERLAAQKQGAFVPFVTVCDPNPELSLKIMDTLVKAGADALELGIPFSDPLADGPTIQGANIRALDSGATPDICFDLIGQIRAKYPDLPIGLLMYANLVYSRGIENFYQRCAQAGIDSVLIADVPTNESAEFVAAAEKFGVHPIFIAPPTASDETLKQVSQLGGGYTYLLSRAGVTGAETKANMPVGDMLAKLEQFNAPPALLGFGISEPEQVKQAIDAGAAGAISGSAVVKIIESHLNEPDAMLTALANFVSNMKSATQK.

Residues Glu49 and Asp60 each act as proton acceptor in the active site.

The protein belongs to the TrpA family. In terms of assembly, tetramer of two alpha and two beta chains.

It catalyses the reaction (1S,2R)-1-C-(indol-3-yl)glycerol 3-phosphate + L-serine = D-glyceraldehyde 3-phosphate + L-tryptophan + H2O. It participates in amino-acid biosynthesis; L-tryptophan biosynthesis; L-tryptophan from chorismate: step 5/5. Functionally, the alpha subunit is responsible for the aldol cleavage of indoleglycerol phosphate to indole and glyceraldehyde 3-phosphate. This Vibrio vulnificus (strain CMCP6) protein is Tryptophan synthase alpha chain.